The following is a 328-amino-acid chain: Sulfate adenylyltransferase subunit 2 (328 aa).

Positions 309–328 (RAIDKDQTASMEKKKQEGYF) are disordered.

This sequence belongs to the PAPS reductase family. CysD subfamily. As to quaternary structure, heterodimer composed of CysD, the smaller subunit, and CysN.

The catalysed reaction is sulfate + ATP + H(+) = adenosine 5'-phosphosulfate + diphosphate. It participates in sulfur metabolism; hydrogen sulfide biosynthesis; sulfite from sulfate: step 1/3. Functionally, with CysN forms the ATP sulfurylase (ATPS) that catalyzes the adenylation of sulfate producing adenosine 5'-phosphosulfate (APS) and diphosphate, the first enzymatic step in sulfur assimilation pathway. APS synthesis involves the formation of a high-energy phosphoric-sulfuric acid anhydride bond driven by GTP hydrolysis by CysN coupled to ATP hydrolysis by CysD. This Hyphomonas neptunium (strain ATCC 15444) protein is Sulfate adenylyltransferase subunit 2.